Here is a 101-residue protein sequence, read N- to C-terminus: Apolipoprotein C-II (101 aa).

The N-terminal stretch at 1-22 (MGTRYFLVGFLILLVLGFEAQG) is a signal peptide. The tract at residues 66-74 (TVDEKIRDI) is lipid binding. The segment at 78 to 101 (STAAVTTYAGIITDQVFSILSGED) is lipoprotein lipase cofactor.

The protein belongs to the apolipoprotein C2 family. In terms of processing, proapolipoprotein C-II is synthesized as a sialic acid containing glycoprotein which is subsequently desialylated prior to its proteolytic processing. Proapolipoprotein C-II, the major form found in plasma undergoes proteolytic cleavage of its N-terminal hexapeptide to generate apolipoprotein C-II, which occurs as the minor form in plasma.

It is found in the secreted. Its function is as follows. Component of chylomicrons, very low-density lipoproteins (VLDL), low-density lipoproteins (LDL), and high-density lipoproteins (HDL) in plasma. Plays an important role in lipoprotein metabolism as an activator of lipoprotein lipase. Both proapolipoprotein C-II and apolipoprotein C-II can activate lipoprotein lipase. In Capra hircus aegagrus (Wild goat), this protein is Apolipoprotein C-II (APOC2).